The primary structure comprises 539 residues: Phosphoenolpyruvate carboxykinase (ATP) (539 aa).

Substrate contacts are provided by R64, Y206, and K212. ATP-binding positions include K212, H231, and 247–255 (GLSGTGKTT). K212 and H231 together coordinate Mn(2+). D268 serves as a coordination point for Mn(2+). ATP is bound by residues E296, R332, 448-449 (RI), and T454. R332 is a substrate binding site.

It belongs to the phosphoenolpyruvate carboxykinase (ATP) family. As to quaternary structure, monomer. Requires Mn(2+) as cofactor.

The protein resides in the cytoplasm. It carries out the reaction oxaloacetate + ATP = phosphoenolpyruvate + ADP + CO2. It participates in carbohydrate biosynthesis; gluconeogenesis. In terms of biological role, involved in the gluconeogenesis. Catalyzes the conversion of oxaloacetate (OAA) to phosphoenolpyruvate (PEP) through direct phosphoryl transfer between the nucleoside triphosphate and OAA. The protein is Phosphoenolpyruvate carboxykinase (ATP) of Sodalis glossinidius (strain morsitans).